The sequence spans 69 residues: Chondroitin proteoglycan 9 (69 aa).

Residues 1–19 (MHLWQLVLLVILFFGAAFG) form the signal peptide. 2 O-linked (Xyl...) (chondroitin sulfate) serine glycosylation sites follow: serine 25 and serine 27.

The sequence is that of Chondroitin proteoglycan 9 from Caenorhabditis elegans.